A 441-amino-acid polypeptide reads, in one-letter code: Glutamate--tRNA ligase 2 (441 aa).

Residues Pro9–Asn19 carry the 'HIGH' region motif. The 'KMSKS' region signature appears at Ala239 to Arg243. Lys242 provides a ligand contact to ATP.

Belongs to the class-I aminoacyl-tRNA synthetase family. Glutamate--tRNA ligase type 1 subfamily. As to quaternary structure, monomer.

The protein localises to the cytoplasm. The catalysed reaction is tRNA(Glu) + L-glutamate + ATP = L-glutamyl-tRNA(Glu) + AMP + diphosphate. Its function is as follows. Catalyzes the attachment of glutamate to tRNA(Glu) in a two-step reaction: glutamate is first activated by ATP to form Glu-AMP and then transferred to the acceptor end of tRNA(Glu). This chain is Glutamate--tRNA ligase 2, found in Cereibacter sphaeroides (strain ATCC 17029 / ATH 2.4.9) (Rhodobacter sphaeroides).